The following is a 455-amino-acid chain: 3-phosphoshikimate 1-carboxyvinyltransferase (455 aa).

Residues 1 to 23 (MSHGSNPRPATARKSSDLKGTLR) are disordered. 3-phosphoshikimate-binding residues include K28, S29, and R33. K28 is a phosphoenolpyruvate binding site. Residues G100 and R128 each contribute to the phosphoenolpyruvate site. Positions 173, 175, 326, and 353 each coordinate 3-phosphoshikimate. Residue Q175 coordinates phosphoenolpyruvate. Residue D326 is the Proton acceptor of the active site. Positions 357 and 405 each coordinate phosphoenolpyruvate.

It belongs to the EPSP synthase family. As to quaternary structure, monomer.

The protein localises to the cytoplasm. It carries out the reaction 3-phosphoshikimate + phosphoenolpyruvate = 5-O-(1-carboxyvinyl)-3-phosphoshikimate + phosphate. It functions in the pathway metabolic intermediate biosynthesis; chorismate biosynthesis; chorismate from D-erythrose 4-phosphate and phosphoenolpyruvate: step 6/7. Its function is as follows. Catalyzes the transfer of the enolpyruvyl moiety of phosphoenolpyruvate (PEP) to the 5-hydroxyl of shikimate-3-phosphate (S3P) to produce enolpyruvyl shikimate-3-phosphate and inorganic phosphate. In Rhizobium meliloti (strain 1021) (Ensifer meliloti), this protein is 3-phosphoshikimate 1-carboxyvinyltransferase.